An 89-amino-acid chain; its full sequence is cAMP-regulated phosphoprotein 21 (89 aa).

The disordered stretch occupies residues 1–89 (MSEPGDLSQT…GGESLQDQTL (89 aa)). S2 is modified (N-acetylserine). Residues S33 and S56 each carry the phosphoserine modification.

As to quaternary structure, interacts with CALM1. In terms of processing, phosphorylation at Ser-56 favors interaction with CALM1.

It is found in the cytoplasm. Functionally, may act as a competitive inhibitor of calmodulin-dependent enzymes such as calcineurin in neurons. The polypeptide is cAMP-regulated phosphoprotein 21 (ARPP21) (Bos taurus (Bovine)).